Consider the following 456-residue polypeptide: Probable serine incorporator (456 aa).

The next 11 helical transmembrane spans lie at 10-32 (AASCAANLACCCGSAACSLCCNF), 44-64 (IVYSIFLLFGLVVSCIVLAPG), 95-115 (VCFGLAAFFLLFCLLMYGVTS), 126-146 (GFWGIKILLFLGAIVAAFFIP), 153-173 (VWMYFGLIGSFLFILIQLVLL), 195-215 (VWAVLLLCATFLMYGFCVAGI), 234-254 (KFFISFNLILCIIASVLAIHP), 265-285 (LLQASVISLYTVYLTWSALSF), 301-321 (LAGMDSQAIIGVILMFVMVVY), 383-403 (VAYSYSFYHFMLMLASLYIMM), and 430-450 (IASSWLCQLIYIWTLLAPALF).

This sequence belongs to the TDE1 family.

Its subcellular location is the endoplasmic reticulum membrane. Enhances the incorporation of serine into phosphatidylserine and sphingolipids. The sequence is that of Probable serine incorporator (serinc) from Nematostella vectensis (Starlet sea anemone).